A 298-amino-acid chain; its full sequence is N-acetylmuramic acid 6-phosphate etherase (298 aa).

The 164-residue stretch at 55-218 (IHAQVSGGGR…STGLMIKSGK (164 aa)) folds into the SIS domain. E83 serves as the catalytic Proton donor. E114 is a catalytic residue.

It belongs to the GCKR-like family. MurNAc-6-P etherase subfamily. In terms of assembly, homodimer.

It catalyses the reaction N-acetyl-D-muramate 6-phosphate + H2O = N-acetyl-D-glucosamine 6-phosphate + (R)-lactate. It functions in the pathway amino-sugar metabolism; 1,6-anhydro-N-acetylmuramate degradation. The protein operates within amino-sugar metabolism; N-acetylmuramate degradation. Its pathway is cell wall biogenesis; peptidoglycan recycling. In terms of biological role, specifically catalyzes the cleavage of the D-lactyl ether substituent of MurNAc 6-phosphate, producing GlcNAc 6-phosphate and D-lactate. Together with AnmK, is also required for the utilization of anhydro-N-acetylmuramic acid (anhMurNAc) either imported from the medium or derived from its own cell wall murein, and thus plays a role in cell wall recycling. This is N-acetylmuramic acid 6-phosphate etherase from Shigella dysenteriae serotype 1 (strain Sd197).